The following is a 199-amino-acid chain: Ribonuclease HII (199 aa).

The RNase H type-2 domain occupies 7–196 (PWVCGVDEAG…VRELMANEKD (190 aa)). Residues Asp13, Glu14, and Asp105 each coordinate a divalent metal cation.

The protein belongs to the RNase HII family. Mn(2+) serves as cofactor. Mg(2+) is required as a cofactor.

The protein localises to the cytoplasm. It carries out the reaction Endonucleolytic cleavage to 5'-phosphomonoester.. Functionally, endonuclease that specifically degrades the RNA of RNA-DNA hybrids. The sequence is that of Ribonuclease HII from Nitrosospira multiformis (strain ATCC 25196 / NCIMB 11849 / C 71).